The chain runs to 107 residues: Small ribosomal subunit protein bS16m (107 aa).

It belongs to the bacterial ribosomal protein bS16 family. As to quaternary structure, component of the mitochondrial small ribosomal subunit (mt-SSU). Mature N.crassa 74S mitochondrial ribosomes consist of a small (37S) and a large (54S) subunit. The 37S small subunit contains a 16S ribosomal RNA (16S mt-rRNA) and 32 different proteins. The 54S large subunit contains a 23S rRNA (23S mt-rRNA) and 42 different proteins.

It localises to the mitochondrion. Component of the mitochondrial ribosome (mitoribosome), a dedicated translation machinery responsible for the synthesis of mitochondrial genome-encoded proteins, including at least some of the essential transmembrane subunits of the mitochondrial respiratory chain. The mitoribosomes are attached to the mitochondrial inner membrane and translation products are cotranslationally integrated into the membrane. This chain is Small ribosomal subunit protein bS16m (cyt-21), found in Neurospora crassa (strain ATCC 24698 / 74-OR23-1A / CBS 708.71 / DSM 1257 / FGSC 987).